A 487-amino-acid chain; its full sequence is 2-aminomuconic semialdehyde dehydrogenase (487 aa).

An NAD(+)-binding site is contributed by 231 to 236 (GSQPTA). Residue E253 is the Proton acceptor of the active site. Catalysis depends on C287, which acts as the Nucleophile.

Belongs to the aldehyde dehydrogenase family.

The protein localises to the cytoplasm. The catalysed reaction is 2-aminomuconate 6-semialdehyde + NAD(+) + H2O = (2Z,4E)-2-aminomuconate + NADH + 2 H(+). It participates in amino-acid degradation; L-kynurenine degradation. Catalyzes the NAD-dependent oxidation of 2-aminomuconic semialdehyde of the kynurenine metabolic pathway in L-tryptophan degradation. In Bos taurus (Bovine), this protein is 2-aminomuconic semialdehyde dehydrogenase (ALDH8A1).